The sequence spans 133 residues: Complexin-1 (133 aa).

Disordered regions lie at residues 1–40 (MDFV…RLEA) and 85–112 (AMEA…DEEE). A compositionally biased stretch (basic and acidic residues) spans 15–40 (DMGKMLGGDEEKDPDAEKKEEERLEA). Positions 28 to 60 (PDAEKKEEERLEALRQAEEERAGKYAKMEAERE) form a coiled coil.

This sequence belongs to the complexin/synaphin family. In terms of assembly, binds to the SNARE core complex containing SNAP25, VAMP2 and syntaxin-1. In terms of tissue distribution, nervous system. Present in electric organ (at protein level).

It localises to the cytoplasm. The protein resides in the cytosol. Its function is as follows. Positively regulates a late step in synaptic vesicle exocytosis. This Narke japonica (Japanese sleeper ray) protein is Complexin-1.